Consider the following 443-residue polypeptide: Delta(6)-fatty-acid desaturase fat-3 (443 aa).

Positions 1–71 (MVVDKNASGL…DLLKKHGEHD (71 aa)) constitute a Cytochrome b5 heme-binding domain. A run of 3 helical transmembrane segments spans residues 136 to 156 (IMAF…ACLL), 296 to 316 (TIVG…TWPL), and 318 to 338 (VAYF…VVTF).

The protein belongs to the fatty acid desaturase type 1 family.

It localises to the membrane. It catalyses the reaction (9Z,12Z)-octadecadienoyl-CoA + 2 Fe(II)-[cytochrome b5] + O2 + 2 H(+) = (6Z,9Z,12Z)-octadecatrienoyl-CoA + 2 Fe(III)-[cytochrome b5] + 2 H2O. The enzyme catalyses (9Z,12Z,15Z)-octadecatrienoyl-CoA + 2 Fe(II)-[cytochrome b5] + O2 + 2 H(+) = (6Z,9Z,12Z,15Z)-octadecatetraenoyl-CoA + 2 Fe(III)-[cytochrome b5] + 2 H2O. Its pathway is lipid metabolism; polyunsaturated fatty acid biosynthesis. Can function as a Delta(6) fatty acid desaturase. Introduces a double bond in the fatty acid chain 6 carbons away from carboxy terminal to biosynthesize polyunsaturated fatty acids (PUFAs) endogenously (PUFAs are essential for membrane structure and many cellular and physiological processes). Acts on a variety of substrates such as linoleoyl-CoA ((9Z,12Z)-octadecadienoyl-CoA, C18:2n-6) and alpha-linolenoyl-CoA ((9Z,12Z,15Z)-octadecatrienoyl-CoA, C18:3n-3) to produce gamma-linolenoyl-CoA ((6Z,9Z,12Z)-octadecatrienoyl-CoA, C18:3n-6) and (6Z,9Z,12Z,15Z)-octadecatetraenoyl-CoA (18:4n-3) respectively. Unlike plants, Caenorhabditis elegans desaturases seem to use fatty acyl-CoAs as substrates. Plays a role in synaptic vesicle recycling by regulating synaptojanin unc-26 localization at synapses. The sequence is that of Delta(6)-fatty-acid desaturase fat-3 (fat-3) from Caenorhabditis elegans.